A 130-amino-acid polypeptide reads, in one-letter code: Protein ApaG (130 aa).

Residues 3 to 127 form the ApaG domain; sequence STITRDIQIT…FSLDSPFSRQ (125 aa).

The chain is Protein ApaG from Beijerinckia indica subsp. indica (strain ATCC 9039 / DSM 1715 / NCIMB 8712).